The chain runs to 845 residues: Protein kintoun (845 aa).

Residues 362–382 (SKEQAQMHETLRHFSREDSGV) are compositionally biased toward basic and acidic residues. Disordered regions lie at residues 362–420 (SKEQ…PVRH), 575–691 (QALK…SMSD), and 773–845 (AQHR…EMDD). At Ser-380 the chain carries Phosphoserine. Residues 391–400 (PVEEDPDGEL) show a composition bias toward acidic residues. The segment covering 584–593 (GTKEEEKENQ) has biased composition (basic and acidic residues). Residues 611–622 (KPGKKQRKRNKK) show a composition bias toward basic residues. Over residues 640–671 (LTKNSELQPKSTFNLPQRKQRSYSECNDSTGG) the composition is skewed to polar residues. The residue at position 779 (Ser-779) is a Phosphoserine. Polar residues predominate over residues 794 to 804 (LKQQENQSRNC).

Belongs to the PIH1 family. Kintoun subfamily. In terms of assembly, interacts with Pp1alpha-96A, Pp1-87B, Pp1-13C and flw.

The protein resides in the cytoplasm. Functionally, required for cytoplasmic pre-assembly of axonemal dyneins, thereby playing a central role in motility in cilia and flagella. Involved in pre-assembly of dynein arm complexes in the cytoplasm before intraflagellar transport loads them for the ciliary compartment. This is Protein kintoun from Drosophila erecta (Fruit fly).